Here is a 333-residue protein sequence, read N- to C-terminus: Ferredoxin--NADP reductase (333 aa).

7 residues coordinate FAD: D32, Q40, Y45, A85, F119, D285, and T326.

This sequence belongs to the ferredoxin--NADP reductase type 2 family. As to quaternary structure, homodimer. Requires FAD as cofactor.

The catalysed reaction is 2 reduced [2Fe-2S]-[ferredoxin] + NADP(+) + H(+) = 2 oxidized [2Fe-2S]-[ferredoxin] + NADPH. The chain is Ferredoxin--NADP reductase from Neorickettsia sennetsu (strain ATCC VR-367 / Miyayama) (Ehrlichia sennetsu).